The primary structure comprises 164 residues: General odorant-binding protein 1 (164 aa).

A signal peptide spans 1–18; it reads MWKLVVVLTVNLLQGALT. Cystine bridges form between Cys-37–Cys-72, Cys-68–Cys-126, and Cys-115–Cys-135.

This sequence belongs to the PBP/GOBP family. In terms of assembly, homodimer. Antenna.

Its function is as follows. Present in the aqueous fluid surrounding olfactory sensory dendrites and are thought to aid in the capture and transport of hydrophobic odorants into and through this fluid. This is General odorant-binding protein 1 from Bombyx mori (Silk moth).